The sequence spans 188 residues: Protein GrpE 2 (188 aa).

Residues Met1–Glu29 are compositionally biased toward basic and acidic residues. The tract at residues Met1–Gln33 is disordered.

This sequence belongs to the GrpE family. In terms of assembly, homodimer.

Its subcellular location is the cytoplasm. In terms of biological role, participates actively in the response to hyperosmotic and heat shock by preventing the aggregation of stress-denatured proteins, in association with DnaK and GrpE. It is the nucleotide exchange factor for DnaK and may function as a thermosensor. Unfolded proteins bind initially to DnaJ; upon interaction with the DnaJ-bound protein, DnaK hydrolyzes its bound ATP, resulting in the formation of a stable complex. GrpE releases ADP from DnaK; ATP binding to DnaK triggers the release of the substrate protein, thus completing the reaction cycle. Several rounds of ATP-dependent interactions between DnaJ, DnaK and GrpE are required for fully efficient folding. The protein is Protein GrpE 2 of Buchnera aphidicola subsp. Schizaphis graminum (strain Sg).